Consider the following 347-residue polypeptide: Gentisate 1,2 dioxygenase 1 (347 aa).

The Cupin type-2 domain occupies 96-163; that stretch reads LQLILPGEVA…DSDKPMIWMD (68 aa).

It belongs to the gentisate 1,2-dioxygenase family. As to quaternary structure, homotetramer. It depends on Fe(2+) as a cofactor.

It catalyses the reaction 2,5-dihydroxybenzoate + O2 = 3-maleylpyruvate + H(+). Completely inhibited by the presence of 5 mM Cu(2+). Partially inhibited with 5 mM Mn(2+), Zn(2+) or EDTA. In terms of biological role, involved in the degradation of gentisate. Catalyzes the conversion of gentisate (2,5-dihydroxybenzoate) to maleylpyruvate. Exhibits broad substrate specificities towards alkyl and halogenated gentisates. The protein is Gentisate 1,2 dioxygenase 1 of Aquipseudomonas alcaligenes (Pseudomonas alcaligenes).